A 498-amino-acid chain; its full sequence is Glycerol kinase (498 aa).

Threonine 12 contributes to the ADP binding site. Positions 12, 13, and 14 each coordinate ATP. Position 12 (threonine 12) interacts with sn-glycerol 3-phosphate. Arginine 16 contributes to the ADP binding site. Sn-glycerol 3-phosphate is bound by residues arginine 82, glutamate 83, tyrosine 134, and aspartate 244. Residues arginine 82, glutamate 83, tyrosine 134, aspartate 244, and glutamine 245 each coordinate glycerol. Threonine 266 and glycine 310 together coordinate ADP. Positions 266, 310, 314, and 411 each coordinate ATP. ADP-binding residues include glycine 411 and asparagine 415.

It belongs to the FGGY kinase family.

The enzyme catalyses glycerol + ATP = sn-glycerol 3-phosphate + ADP + H(+). The protein operates within polyol metabolism; glycerol degradation via glycerol kinase pathway; sn-glycerol 3-phosphate from glycerol: step 1/1. Its activity is regulated as follows. Inhibited by fructose 1,6-bisphosphate (FBP). Key enzyme in the regulation of glycerol uptake and metabolism. Catalyzes the phosphorylation of glycerol to yield sn-glycerol 3-phosphate. The sequence is that of Glycerol kinase from Chloroflexus aurantiacus (strain ATCC 29364 / DSM 637 / Y-400-fl).